We begin with the raw amino-acid sequence, 184 residues long: Leucine-rich repeat-containing protein 20 (184 aa).

LRR repeat units follow at residues 51 to 72 (QIHLITLANNELKSLTSKFMTT), 75 to 96 (QLRELHLEGNFLHRLPSEVSAL), 98 to 120 (HLKAIDLSRNQFQDFPEQLTALP), 121 to 141 (ALETINLEENEIVDVPVEKLA), and 145 to 167 (ALRSINLRFNPLNAEVRVIAPPL). At Ser-175 the chain carries Phosphoserine.

The protein is Leucine-rich repeat-containing protein 20 (LRRC20) of Homo sapiens (Human).